Here is a 65-residue protein sequence, read N- to C-terminus: Large ribosomal subunit protein bL35 (65 aa).

A compositionally biased stretch (basic residues) spans 1–10 (MPKMKSKSSA). Residues 1–21 (MPKMKSKSSAKMRFSVRAGGT) are disordered.

It belongs to the bacterial ribosomal protein bL35 family.

The chain is Large ribosomal subunit protein bL35 from Polynucleobacter necessarius subsp. necessarius (strain STIR1).